A 327-amino-acid polypeptide reads, in one-letter code: uncharacterized protein (327 aa).

Residues 32 to 105 (VRLDKWLAEQ…IPLDILYEDE (74 aa)) form the S4 RNA-binding domain. Asp156 is an active-site residue.

Belongs to the pseudouridine synthase RluA family.

The enzyme catalyses a uridine in RNA = a pseudouridine in RNA. This is an uncharacterized protein from Synechocystis sp. (strain ATCC 27184 / PCC 6803 / Kazusa).